We begin with the raw amino-acid sequence, 381 residues long: Creatine kinase B-type (381 aa).

A Phosphagen kinase N-terminal domain is found at 11 to 98 (KMKYSVDDEY…FDPVIEDRHG (88 aa)). Val-72 serves as a coordination point for creatine. The Phosphagen kinase C-terminal domain occupies 125-367 (YVLSSRVRTG…KLLIEMEKRL (243 aa)). ATP is bound by residues 128–132 (SSRVR), Arg-130, Arg-132, and His-191. Creatine is bound at residue Glu-232. Residue Arg-236 coordinates ATP. Thr-282 bears the Phosphothreonine; by autocatalysis mark. A creatine-binding site is contributed by Ser-285. Ser-285 is subject to Phosphoserine; by autocatalysis. Thr-289 bears the Phosphothreonine; by autocatalysis mark. ATP-binding positions include Arg-292, Arg-320, 320–325 (RGTGGV), and Asp-335.

This sequence belongs to the ATP:guanido phosphotransferase family. As to quaternary structure, dimer of identical or non-identical chains, which can be either B (brain type) or M (muscle type). With MM being the major form in skeletal muscle and myocardium, MB existing in myocardium, and BB existing in many tissues, especially brain. Post-translationally, ba-CK and Bb-CK are phosphorylated. The N-terminus of BA-CK is blocked. Expressed in almost all tissues and found enriched in various region of the brain, retina, heart, gizzard, gut and sperm.

The protein localises to the cytoplasm. Its subcellular location is the cytosol. The protein resides in the mitochondrion. It is found in the cell membrane. It carries out the reaction creatine + ATP = N-phosphocreatine + ADP + H(+). Functionally, reversibly catalyzes the transfer of phosphate between ATP and various phosphogens (e.g. creatine phosphate). Creatine kinase isoenzymes play a central role in energy transduction in tissues with large, fluctuating energy demands, such as skeletal muscle, heart, brain and spermatozoa. This is Creatine kinase B-type from Gallus gallus (Chicken).